We begin with the raw amino-acid sequence, 373 residues long: Queuine tRNA-ribosyltransferase (373 aa).

D89 (proton acceptor) is an active-site residue. Residues 89-93 (DSGGF), D143, Q187, and G214 each bind substrate. Residues 245–251 (GVGKPED) form an RNA binding region. D264 (nucleophile) is an active-site residue. The segment at 269-273 (TRNAR) is RNA binding; important for wobble base 34 recognition. Zn(2+)-binding residues include C302, C304, C307, and H333.

The protein belongs to the queuine tRNA-ribosyltransferase family. As to quaternary structure, homodimer. Within each dimer, one monomer is responsible for RNA recognition and catalysis, while the other monomer binds to the replacement base PreQ1. Zn(2+) is required as a cofactor.

The catalysed reaction is 7-aminomethyl-7-carbaguanine + guanosine(34) in tRNA = 7-aminomethyl-7-carbaguanosine(34) in tRNA + guanine. It participates in tRNA modification; tRNA-queuosine biosynthesis. In terms of biological role, catalyzes the base-exchange of a guanine (G) residue with the queuine precursor 7-aminomethyl-7-deazaguanine (PreQ1) at position 34 (anticodon wobble position) in tRNAs with GU(N) anticodons (tRNA-Asp, -Asn, -His and -Tyr). Catalysis occurs through a double-displacement mechanism. The nucleophile active site attacks the C1' of nucleotide 34 to detach the guanine base from the RNA, forming a covalent enzyme-RNA intermediate. The proton acceptor active site deprotonates the incoming PreQ1, allowing a nucleophilic attack on the C1' of the ribose to form the product. After dissociation, two additional enzymatic reactions on the tRNA convert PreQ1 to queuine (Q), resulting in the hypermodified nucleoside queuosine (7-(((4,5-cis-dihydroxy-2-cyclopenten-1-yl)amino)methyl)-7-deazaguanosine). In Tolumonas auensis (strain DSM 9187 / NBRC 110442 / TA 4), this protein is Queuine tRNA-ribosyltransferase.